We begin with the raw amino-acid sequence, 265 residues long: Protein HesA, vegetative (265 aa).

It belongs to the HesA/MoeB/ThiF family.

This chain is Protein HesA, vegetative (hesA2), found in Trichormus variabilis (strain ATCC 29413 / PCC 7937) (Anabaena variabilis).